We begin with the raw amino-acid sequence, 194 residues long: dITP/XTP pyrophosphatase (194 aa).

Residue 11–16 (SHNAGK) coordinates substrate. Residue D70 is the Proton acceptor of the active site. D70 provides a ligand contact to Mg(2+). Substrate-binding positions include S71, 149–152 (FGYD), K172, and 177–178 (HR).

This sequence belongs to the HAM1 NTPase family. Homodimer. Mg(2+) is required as a cofactor.

It catalyses the reaction XTP + H2O = XMP + diphosphate + H(+). It carries out the reaction dITP + H2O = dIMP + diphosphate + H(+). The catalysed reaction is ITP + H2O = IMP + diphosphate + H(+). Functionally, pyrophosphatase that catalyzes the hydrolysis of nucleoside triphosphates to their monophosphate derivatives, with a high preference for the non-canonical purine nucleotides XTP (xanthosine triphosphate), dITP (deoxyinosine triphosphate) and ITP. Seems to function as a house-cleaning enzyme that removes non-canonical purine nucleotides from the nucleotide pool, thus preventing their incorporation into DNA/RNA and avoiding chromosomal lesions. The polypeptide is dITP/XTP pyrophosphatase (Thermosynechococcus vestitus (strain NIES-2133 / IAM M-273 / BP-1)).